Consider the following 505-residue polypeptide: Probable alpha-L-arabinofuranosidase C (505 aa).

Residues N81, N152, N269, and N438 are each glycosylated (N-linked (GlcNAc...) asparagine).

The protein belongs to the glycosyl hydrolase 51 family.

It is found in the secreted. The catalysed reaction is Hydrolysis of terminal non-reducing alpha-L-arabinofuranoside residues in alpha-L-arabinosides.. It participates in glycan metabolism; L-arabinan degradation. Its function is as follows. Alpha-L-arabinofuranosidase involved in the degradation of arabinoxylan, a major component of plant hemicellulose. Acts only on small linear 1,5-alpha-linked L-arabinofuranosyl oligosaccharides. In Aspergillus fumigatus (strain ATCC MYA-4609 / CBS 101355 / FGSC A1100 / Af293) (Neosartorya fumigata), this protein is Probable alpha-L-arabinofuranosidase C (abfC).